Here is a 77-residue protein sequence, read N- to C-terminus: Large ribosomal subunit protein bL28 (77 aa).

It belongs to the bacterial ribosomal protein bL28 family.

The protein is Large ribosomal subunit protein bL28 of Polaromonas naphthalenivorans (strain CJ2).